The following is a 451-amino-acid chain: Bifunctional protein GlmU (451 aa).

The interval 1–226 is pyrophosphorylase; it reads MVAVAILAAG…YLEISGINDR (226 aa). Residues 7-10, lysine 21, glutamine 73, and 78-79 each bind UDP-N-acetyl-alpha-D-glucosamine; these read LAAG and GT. Aspartate 103 serves as a coordination point for Mg(2+). 4 residues coordinate UDP-N-acetyl-alpha-D-glucosamine: glycine 140, glutamate 155, asparagine 170, and asparagine 224. Asparagine 224 contributes to the Mg(2+) binding site. A linker region spans residues 227 to 247; the sequence is KQLATAYDILQNRIKDYWMRA. Residues 248–451 are N-acetyltransferase; that stretch reads GVTLIDPDSI…ISGWRMKTDD (204 aa). Residues arginine 329 and lysine 347 each contribute to the UDP-N-acetyl-alpha-D-glucosamine site. Histidine 359 serves as the catalytic Proton acceptor. Positions 362 and 373 each coordinate UDP-N-acetyl-alpha-D-glucosamine. Acetyl-CoA contacts are provided by residues alanine 376, 382–383, alanine 419, and arginine 436; that span reads NY.

This sequence in the N-terminal section; belongs to the N-acetylglucosamine-1-phosphate uridyltransferase family. In the C-terminal section; belongs to the transferase hexapeptide repeat family. In terms of assembly, homotrimer. Mg(2+) serves as cofactor.

Its subcellular location is the cytoplasm. The enzyme catalyses alpha-D-glucosamine 1-phosphate + acetyl-CoA = N-acetyl-alpha-D-glucosamine 1-phosphate + CoA + H(+). It catalyses the reaction N-acetyl-alpha-D-glucosamine 1-phosphate + UTP + H(+) = UDP-N-acetyl-alpha-D-glucosamine + diphosphate. It participates in nucleotide-sugar biosynthesis; UDP-N-acetyl-alpha-D-glucosamine biosynthesis; N-acetyl-alpha-D-glucosamine 1-phosphate from alpha-D-glucosamine 6-phosphate (route II): step 2/2. The protein operates within nucleotide-sugar biosynthesis; UDP-N-acetyl-alpha-D-glucosamine biosynthesis; UDP-N-acetyl-alpha-D-glucosamine from N-acetyl-alpha-D-glucosamine 1-phosphate: step 1/1. It functions in the pathway bacterial outer membrane biogenesis; LPS lipid A biosynthesis. Functionally, catalyzes the last two sequential reactions in the de novo biosynthetic pathway for UDP-N-acetylglucosamine (UDP-GlcNAc). The C-terminal domain catalyzes the transfer of acetyl group from acetyl coenzyme A to glucosamine-1-phosphate (GlcN-1-P) to produce N-acetylglucosamine-1-phosphate (GlcNAc-1-P), which is converted into UDP-GlcNAc by the transfer of uridine 5-monophosphate (from uridine 5-triphosphate), a reaction catalyzed by the N-terminal domain. This Gloeothece citriformis (strain PCC 7424) (Cyanothece sp. (strain PCC 7424)) protein is Bifunctional protein GlmU.